Here is a 548-residue protein sequence, read N- to C-terminus: Inosine-5'-monophosphate dehydrogenase (548 aa).

2 consecutive CBS domains span residues 121–201 and 205–261; these read FILD…EDPV and MSTE…PLAS. Residues 298 to 300 and 348 to 350 contribute to the NAD(+) site; these read DSS and GMG. K(+) is bound by residues G350 and G352. S353 serves as a coordination point for IMP. C355 is a binding site for K(+). Catalysis depends on C355, which acts as the Thioimidate intermediate. IMP-binding positions include 388–390 and 411–412; these read DGG and GS. R461 (proton acceptor) is an active-site residue. Q473 is a binding site for IMP. Residues 527-548 form a disordered region; that stretch reads ASAQTEGNVHGLHSHEKKLYSS. Position 528 (S528) interacts with K(+). A compositionally biased stretch (basic and acidic residues) spans 539–548; it reads HSHEKKLYSS.

It belongs to the IMPDH/GMPR family. As to quaternary structure, homotetramer. K(+) serves as cofactor.

Its subcellular location is the cytoplasm. It catalyses the reaction IMP + NAD(+) + H2O = XMP + NADH + H(+). It functions in the pathway purine metabolism; XMP biosynthesis via de novo pathway; XMP from IMP: step 1/1. With respect to regulation, mycophenolic acid (MPA) is a non-competitive inhibitor that prevents formation of the closed enzyme conformation by binding to the same site as the amobile flap. In contrast, mizoribine monophosphate (MZP) is a competitive inhibitor that induces the closed conformation. MPA is a potent inhibitor of mammalian IMPDHs but a poor inhibitor of the bacterial enzymes. MZP is a more potent inhibitor of bacterial IMPDH. Catalyzes the conversion of inosine 5'-phosphate (IMP) to xanthosine 5'-phosphate (XMP), the first committed and rate-limiting step in the de novo synthesis of guanine nucleotides, and therefore plays an important role in the regulation of cell growth. Part of the gene cluster that mediates the biosynthesis of mycophenolic acid (MPA), the first isolated antibiotic natural product in the world. Does not play a role in the biosynthesis of MPA, but is involved in self resistance to MPA, since MPA acts as an inhibitor of IMP dehydrogenases. This Penicillium brevicompactum protein is Inosine-5'-monophosphate dehydrogenase.